The chain runs to 329 residues: GTPase Obg (329 aa).

The Obg domain occupies 1 to 159; the sequence is MQFIDEAKIF…MWVWLHLKLL (159 aa). The OBG-type G domain occupies 160–327; that stretch reads SDVGLVGLPN…LLANILSELQ (168 aa). GTP is bound by residues 166 to 173, 191 to 195, 212 to 215, 279 to 282, and 308 to 310; these read GLPNAGKS, FTTLT, DIPG, TKTD, and SSY. Mg(2+) is bound by residues Ser-173 and Thr-193.

Belongs to the TRAFAC class OBG-HflX-like GTPase superfamily. OBG GTPase family. As to quaternary structure, monomer. Requires Mg(2+) as cofactor.

Its subcellular location is the cytoplasm. An essential GTPase which binds GTP, GDP and possibly (p)ppGpp with moderate affinity, with high nucleotide exchange rates and a fairly low GTP hydrolysis rate. Plays a role in control of the cell cycle, stress response, ribosome biogenesis and in those bacteria that undergo differentiation, in morphogenesis control. The chain is GTPase Obg from Orientia tsutsugamushi (strain Boryong) (Rickettsia tsutsugamushi).